Reading from the N-terminus, the 179-residue chain is Large ribosomal subunit protein uL5 (179 aa).

This sequence belongs to the universal ribosomal protein uL5 family. In terms of assembly, part of the 50S ribosomal subunit; part of the 5S rRNA/L5/L18/L25 subcomplex. Contacts the 5S rRNA and the P site tRNA. Forms a bridge to the 30S subunit in the 70S ribosome.

Its function is as follows. This is one of the proteins that bind and probably mediate the attachment of the 5S RNA into the large ribosomal subunit, where it forms part of the central protuberance. In the 70S ribosome it contacts protein S13 of the 30S subunit (bridge B1b), connecting the 2 subunits; this bridge is implicated in subunit movement. Contacts the P site tRNA; the 5S rRNA and some of its associated proteins might help stabilize positioning of ribosome-bound tRNAs. This is Large ribosomal subunit protein uL5 from Synechococcus sp. (strain CC9605).